The primary structure comprises 783 residues: Transcription factor E4F1 (783 aa).

The segment at 40-84 (GFLGLPAPFSEEDEDDVHRCGRCQVEFTALEDFVQHKIQKTCHRA) is required for ubiquitin ligase activity. Position 49 is a phosphoserine (serine 49). The tract at residues 185–264 (LLVNKEGRYV…GKSFRESGAL (80 aa)) is mediates dimerization, DNA-binding, transcription repression of CCNA2 and interaction with HMGA2. 2 consecutive C2H2-type zinc fingers follow at residues 193 to 215 (YVCM…MVTH) and 221 to 243 (HECK…HRRH). Residues 249–273 (YKCAKCGKSFRESGALTRHLKSLTP) form a C2H2-type 3; degenerate zinc finger. Residues 368–565 (NLLHQAMQNS…REKGSLVRHV (198 aa)) form a mediates interaction with CDKN2A region. Residues 386–407 (GEESALEPAPPSGSSPQCLGDG) form a disordered region. 5 consecutive C2H2-type zinc fingers follow at residues 434 to 456 (HPCP…KRGH), 462 to 484 (FTCT…QEVH), 490 to 512 (FRCG…RRVH), 518 to 540 (FPCP…FRTH), and 546 to 568 (HVCQ…VRHH). The interaction with BMI1 stretch occupies residues 434–598 (HPCPQCSETF…LNRHLRTKGG (165 aa)). Positions 520–579 (CPQCGKRYKTKNAQQVHFRTHLEEKPHVCQFCSRGFREKGSLVRHVRHHTGEKPFKCYKC) are mediates interaction with TP53. The C2H2-type 9; degenerate zinc finger occupies 574–596 (FKCYKCGRGFAEHGTLNRHLRTK). A mediates interaction with RASSF1 region spans residues 574-596 (FKCYKCGRGFAEHGTLNRHLRTK).

In terms of assembly, homodimer; binds DNA as a dimer. Forms a complex with CDKN2A and TP53. Interacts with HDAC1, HMGA2 and RASSF1. Interactions with TP53, RB1, ANP32A and probably BMI1 and FHL2 regulate E4F1 activity. Phosphorylated; phosphorylation is cell cycle-dependent and regulates DNA-binding activity and function. Post-translationally, may be sumoylated by UBE2I upon interaction with CDKN2A. As to expression, ubiquitously expressed.

The protein localises to the nucleus. The protein resides in the nucleoplasm. It is found in the cytoplasm. The enzyme catalyses S-ubiquitinyl-[E2 ubiquitin-conjugating enzyme]-L-cysteine + [acceptor protein]-L-lysine = [E2 ubiquitin-conjugating enzyme]-L-cysteine + N(6)-ubiquitinyl-[acceptor protein]-L-lysine.. The protein operates within protein modification; protein ubiquitination. In terms of biological role, may function as a transcriptional repressor. May also function as a ubiquitin ligase mediating ubiquitination of chromatin-associated TP53. Functions in cell survival and proliferation through control of the cell cycle. Functions in the p53 and pRB tumor suppressor pathways and regulates the cyclin CCNA2 transcription. This chain is Transcription factor E4F1 (E4f1), found in Mus musculus (Mouse).